The following is a 94-amino-acid chain: Integration host factor subunit beta (94 aa).

The protein belongs to the bacterial histone-like protein family. In terms of assembly, heterodimer of an alpha and a beta chain.

Functionally, this protein is one of the two subunits of integration host factor, a specific DNA-binding protein that functions in genetic recombination as well as in transcriptional and translational control. This is Integration host factor subunit beta from Nitrosospira multiformis (strain ATCC 25196 / NCIMB 11849 / C 71).